The sequence spans 515 residues: 2,3-bisphosphoglycerate-independent phosphoglycerate mutase (515 aa).

Mn(2+)-binding residues include aspartate 14 and serine 64. Serine 64 functions as the Phosphoserine intermediate in the catalytic mechanism. Substrate-binding positions include histidine 125, 155-156, arginine 187, arginine 193, 263-266, and lysine 337; these read RD and RADR. Mn(2+) is bound by residues aspartate 404, histidine 408, aspartate 445, histidine 446, and histidine 464.

Belongs to the BPG-independent phosphoglycerate mutase family. As to quaternary structure, monomer. Mn(2+) is required as a cofactor.

It catalyses the reaction (2R)-2-phosphoglycerate = (2R)-3-phosphoglycerate. Its pathway is carbohydrate degradation; glycolysis; pyruvate from D-glyceraldehyde 3-phosphate: step 3/5. In terms of biological role, catalyzes the interconversion of 2-phosphoglycerate and 3-phosphoglycerate. The chain is 2,3-bisphosphoglycerate-independent phosphoglycerate mutase from Yersinia pestis bv. Antiqua (strain Antiqua).